A 146-amino-acid chain; its full sequence is Hemoglobin subunit beta (146 aa).

The 145-residue stretch at 2–146 (HWSAEEKQLI…VAHALARKYH (145 aa)) folds into the Globin domain. Positions 63 and 92 each coordinate heme b.

This sequence belongs to the globin family. In terms of assembly, heterotetramer of two alpha chains and two beta chains. As to expression, red blood cells.

Functionally, involved in oxygen transport from the lung to the various peripheral tissues. This Stercorarius maccormicki (South polar skua) protein is Hemoglobin subunit beta (HBB).